The following is a 323-amino-acid chain: Beta-ketoacyl-[acyl-carrier-protein] synthase III (323 aa).

Catalysis depends on residues cysteine 113 and histidine 250. The tract at residues 251–255 (QANRR) is ACP-binding. Asparagine 280 is a catalytic residue.

This sequence belongs to the thiolase-like superfamily. FabH family. Homodimer.

It localises to the cytoplasm. It carries out the reaction malonyl-[ACP] + acetyl-CoA + H(+) = 3-oxobutanoyl-[ACP] + CO2 + CoA. Its pathway is lipid metabolism; fatty acid biosynthesis. Its function is as follows. Catalyzes the condensation reaction of fatty acid synthesis by the addition to an acyl acceptor of two carbons from malonyl-ACP. Catalyzes the first condensation reaction which initiates fatty acid synthesis and may therefore play a role in governing the total rate of fatty acid production. Possesses both acetoacetyl-ACP synthase and acetyl transacylase activities. Its substrate specificity determines the biosynthesis of branched-chain and/or straight-chain of fatty acids. The chain is Beta-ketoacyl-[acyl-carrier-protein] synthase III from Rhizobium johnstonii (strain DSM 114642 / LMG 32736 / 3841) (Rhizobium leguminosarum bv. viciae).